The following is a 552-amino-acid chain: Urocanate hydratase (552 aa).

NAD(+) is bound by residues 49-50 (GG), Gln127, 173-175 (GMG), Asp193, 239-240 (NA), 260-264 (QTSAH), 270-271 (YI), and Tyr319. Cys407 is a catalytic residue. Gly489 provides a ligand contact to NAD(+).

The protein belongs to the urocanase family. NAD(+) is required as a cofactor.

It localises to the cytoplasm. The catalysed reaction is 4-imidazolone-5-propanoate = trans-urocanate + H2O. It participates in amino-acid degradation; L-histidine degradation into L-glutamate; N-formimidoyl-L-glutamate from L-histidine: step 2/3. In terms of biological role, catalyzes the conversion of urocanate to 4-imidazolone-5-propionate. This Bacillus cereus (strain ATCC 14579 / DSM 31 / CCUG 7414 / JCM 2152 / NBRC 15305 / NCIMB 9373 / NCTC 2599 / NRRL B-3711) protein is Urocanate hydratase.